A 119-amino-acid chain; its full sequence is Phosphoribosyl-AMP cyclohydrolase (119 aa).

Aspartate 77 lines the Mg(2+) pocket. A Zn(2+)-binding site is contributed by cysteine 78. Mg(2+)-binding residues include aspartate 79 and aspartate 81. The Zn(2+) site is built by cysteine 94 and cysteine 101.

Belongs to the PRA-CH family. In terms of assembly, homodimer. Requires Mg(2+) as cofactor. It depends on Zn(2+) as a cofactor.

It localises to the cytoplasm. It catalyses the reaction 1-(5-phospho-beta-D-ribosyl)-5'-AMP + H2O = 1-(5-phospho-beta-D-ribosyl)-5-[(5-phospho-beta-D-ribosylamino)methylideneamino]imidazole-4-carboxamide. Its pathway is amino-acid biosynthesis; L-histidine biosynthesis; L-histidine from 5-phospho-alpha-D-ribose 1-diphosphate: step 3/9. In terms of biological role, catalyzes the hydrolysis of the adenine ring of phosphoribosyl-AMP. The protein is Phosphoribosyl-AMP cyclohydrolase of Ruegeria pomeroyi (strain ATCC 700808 / DSM 15171 / DSS-3) (Silicibacter pomeroyi).